A 283-amino-acid polypeptide reads, in one-letter code: Formamidopyrimidine-DNA glycosylase (283 aa).

The active-site Schiff-base intermediate with DNA is proline 2. Catalysis depends on glutamate 3, which acts as the Proton donor. Residue lysine 60 is the Proton donor; for beta-elimination activity of the active site. 3 residues coordinate DNA: histidine 100, arginine 119, and arginine 164. The FPG-type zinc-finger motif lies at 249 to 283 (WVYNRAGEPCKVCGDVIQRIKLGGRSSHFCRQCQV). The active-site Proton donor; for delta-elimination activity is the arginine 273.

Belongs to the FPG family. In terms of assembly, monomer. Requires Zn(2+) as cofactor.

The enzyme catalyses Hydrolysis of DNA containing ring-opened 7-methylguanine residues, releasing 2,6-diamino-4-hydroxy-5-(N-methyl)formamidopyrimidine.. It catalyses the reaction 2'-deoxyribonucleotide-(2'-deoxyribose 5'-phosphate)-2'-deoxyribonucleotide-DNA = a 3'-end 2'-deoxyribonucleotide-(2,3-dehydro-2,3-deoxyribose 5'-phosphate)-DNA + a 5'-end 5'-phospho-2'-deoxyribonucleoside-DNA + H(+). Its function is as follows. Involved in base excision repair of DNA damaged by oxidation or by mutagenic agents. Acts as a DNA glycosylase that recognizes and removes damaged bases. Has a preference for oxidized purines, such as 7,8-dihydro-8-oxoguanine (8-oxoG). Has AP (apurinic/apyrimidinic) lyase activity and introduces nicks in the DNA strand. Cleaves the DNA backbone by beta-delta elimination to generate a single-strand break at the site of the removed base with both 3'- and 5'-phosphates. This Nostoc sp. (strain PCC 7120 / SAG 25.82 / UTEX 2576) protein is Formamidopyrimidine-DNA glycosylase.